Consider the following 137-residue polypeptide: Large ribosomal subunit protein uL16 (137 aa).

Over residues 1 to 17 (MLQPKRTKFRKTHKGRN) the composition is skewed to basic residues. The segment at 1–24 (MLQPKRTKFRKTHKGRNRGLANSG) is disordered.

This sequence belongs to the universal ribosomal protein uL16 family. Part of the 50S ribosomal subunit.

Its function is as follows. Binds 23S rRNA and is also seen to make contacts with the A and possibly P site tRNAs. This is Large ribosomal subunit protein uL16 from Aeromonas hydrophila subsp. hydrophila (strain ATCC 7966 / DSM 30187 / BCRC 13018 / CCUG 14551 / JCM 1027 / KCTC 2358 / NCIMB 9240 / NCTC 8049).